Consider the following 650-residue polypeptide: Acetyl-coenzyme A synthetase (650 aa).

Residues 191-194 (RGGR), Thr311, and Asn335 each bind CoA. Residues 387 to 389 (GEP), 411 to 416 (DTWWQT), Asp500, and Arg515 each bind ATP. A CoA-binding site is contributed by Ser523. Arg526 is an ATP binding site. 3 residues coordinate Mg(2+): Val537, His539, and Val542. Arg584 contacts CoA. Residue Lys609 is modified to N6-acetyllysine.

The protein belongs to the ATP-dependent AMP-binding enzyme family. The cofactor is Mg(2+). Post-translationally, acetylated. Deacetylation by the SIR2-homolog deacetylase activates the enzyme.

The enzyme catalyses acetate + ATP + CoA = acetyl-CoA + AMP + diphosphate. Catalyzes the conversion of acetate into acetyl-CoA (AcCoA), an essential intermediate at the junction of anabolic and catabolic pathways. AcsA undergoes a two-step reaction. In the first half reaction, AcsA combines acetate with ATP to form acetyl-adenylate (AcAMP) intermediate. In the second half reaction, it can then transfer the acetyl group from AcAMP to the sulfhydryl group of CoA, forming the product AcCoA. The chain is Acetyl-coenzyme A synthetase from Shewanella baltica (strain OS155 / ATCC BAA-1091).